Reading from the N-terminus, the 1561-residue chain is Synemin (1561 aa).

The segment at 1–10 (MLSWRLQTGS) is head. Positions 11–49 (EKAELQELNARLYDYVCRVRELERENLLLEEELRSRLSR) are coil 1A. The tract at residues 11 to 320 (EKAELQELNA…YRALLEGESN (310 aa)) is interaction with DMD and UTRN. The IF rod domain maps to 11–322 (EKAELQELNA…ALLEGESNPE (312 aa)). Positions 50–58 (EDRWAEDQA) are linker 1. The tract at residues 59-163 (LYAEEARSLR…DLRARAASLT (105 aa)) is coil 1B. The linker 12 stretch occupies residues 164 to 186 (MHFRARATSPAAPPPRLRDVHDS). The tract at residues 187–300 (YALLVAESWR…LRDYQELLQV (114 aa)) is coil 2. Residues 301–1561 (KTGLSLEVAT…EEEEEGEGWF (1261 aa)) are tail. Composition is skewed to polar residues over residues 371–390 (SSAS…TTAV) and 401–421 (SRHS…KTIS). Disordered stretches follow at residues 371 to 421 (SSAS…KTIS), 549 to 574 (DARK…RSVK), and 591 to 637 (EVST…DSTT). Positions 601-624 (GRKDVSHSGGREAETKETRFRLDT) are enriched in basic and acidic residues. Positions 625-637 (QDTASSLQSDSTT) are enriched in polar residues. Thr653 carries the post-translational modification Phosphothreonine. 9 positions are modified to phosphoserine: Ser655, Ser778, Ser780, Ser1044, Ser1049, Ser1077, Ser1087, Ser1179, and Ser1182. Disordered regions lie at residues 1033–1061 (SVVR…VPAG) and 1075–1099 (SPSG…QGPV). Polar residues predominate over residues 1086–1099 (VSPSSDQRVTQGPV). Residues 1152–1453 (VSGDFSEAVS…GPKETSFTFQ (302 aa)) form an interaction with TLN1 and VCL region. Residues 1212-1231 (ADISGSGRMPGSERSHTEKE) form a disordered region. The segment covering 1222 to 1231 (GSERSHTEKE) has biased composition (basic and acidic residues). Residues 1242 to 1557 (AQVGGNFATE…DNEEEEEEEG (316 aa)) form an interaction with DMD and UTRN region. Residue Ser1425 is modified to Phosphoserine. An Omega-N-methylarginine modification is found at Arg1481. The tract at residues 1491–1519 (DERVASTGSGASPGDAHQAPGEKGTEQAG) is disordered.

It belongs to the intermediate filament family. Interacts with DES, DMD, DTNA, TLN1, UTRN and VCL. Isoform 1 and isoform 2 interact with GFAP and VIM. In terms of tissue distribution, isoform 2 and isoform 3 are detected in adult skeletal muscle, heart and bladder, whereas isoform 1 is only detected in adult bladder (at protein level).

The protein resides in the cytoplasm. It localises to the cytoskeleton. The protein localises to the cell junction. Its subcellular location is the adherens junction. Functionally, type-VI intermediate filament (IF) which plays an important cytoskeletal role within the muscle cell cytoskeleton. It forms heteromeric IFs with desmin and/or vimentin, and via its interaction with cytoskeletal proteins alpha-dystrobrevin, dystrophin, talin-1, utrophin and vinculin, is able to link these heteromeric IFs to adherens-type junctions, such as to the costameres, neuromuscular junctions, and myotendinous junctions within striated muscle cells. This Mus musculus (Mouse) protein is Synemin.